A 320-amino-acid chain; its full sequence is Transcription factor MYB80 (320 aa).

2 HTH myb-type domains span residues Lys-9–Leu-65 and Lys-66–Leu-116. 2 consecutive DNA-binding regions (H-T-H motif) follow at residues Trp-37 to Leu-61 and Trp-89 to Leu-112. The segment at Thr-257–Gly-283 is disordered. Basic and acidic residues predominate over residues Glu-263 to Val-272.

Expressed in the tapetum and middle layer of developing anthers. Expressed in trichomes.

Its subcellular location is the nucleus. In terms of biological role, transcription factor that binds to the DNA sequence 5'-CCAACC-3'. Regulates directly PME5, UND and GLOX1. Essential for tapetum development in anthers and microsporogenesis. Regulates the timing of tapetal programmed cell death (PCD) which is critical for pollen development. May act through the activation of UND, encoding an A1 aspartic protease. Required for anther development by regulating tapetum development, callose dissolution and exine formation. Acts upstream of A6 and FAR2/MS2, two genes required for pollen exine formation. Negatively regulates trichome endoreduplication and trichome branching. This chain is Transcription factor MYB80, found in Arabidopsis thaliana (Mouse-ear cress).